The sequence spans 366 residues: Lysophosphatidic acid receptor 1-A (366 aa).

Residues 1–52 (MASLSEFVSEPISMMSQTSAASESQCYYNETIAFFYNRSGKYLATEWNAVSK) are Extracellular-facing. 2 disulfide bridges follow: C26–C192 and C190–C197. 2 N-linked (GlcNAc...) asparagine glycosylation sites follow: N29 and N37. An a 1-acyl-sn-glycero-3-phosphate-binding site is contributed by K41. The chain crosses the membrane as a helical span at residues 53-77 (LVMGLGITVCIFIMLANLLVMVAIY). The Cytoplasmic portion of the chain corresponds to 78-85 (VNRRFHFP). The helical transmembrane segment at 86 to 109 (IYYLMANLAAADFFAGLAYFYLMF) threads the bilayer. Over 110 to 123 (NTGPNTRRLTVSTW) the chain is Extracellular. A helical membrane pass occupies residues 124 to 146 (LLRQGLIDTSLTASVANLLAIAI). Residue 126–131 (RQGLID) participates in a 1-acyl-sn-glycero-3-phosphate binding. Residues 147–165 (ERHITVFRMQLHTRMSNRR) are Cytoplasmic-facing. A helical transmembrane segment spans residues 166 to 186 (VVVVIVVIWTVAIVMGAIPSV). Topologically, residues 187–206 (GWNCICDLEQCSNMAPLYSD) are extracellular. The helical transmembrane segment at 207–227 (SYLIFWTIFNLVTFVVMVVLY) threads the bilayer. W212 is a binding site for a 1-acyl-sn-glycero-3-phosphate. The Cytoplasmic portion of the chain corresponds to 228 to 257 (AHIFVYVRQKTMRMSRHSSGPRRNRDTMMS). Residues 258 to 282 (LLKTVVIVLGAFIVCWTPGLVLLLL) form a helical membrane-spanning segment. The Extracellular portion of the chain corresponds to 283–296 (DICCPQCNILAYEK). The cysteines at positions 286 and 289 are disulfide-linked. A helical membrane pass occupies residues 297–317 (FFLLLAEFNSAMNPIIYSYRD). Over 318 to 366 (KEMSATFKQILCCQRTENVNGPTEGSDRSASSLNHTILAGVHSNDHSVV) the chain is Cytoplasmic.

This sequence belongs to the G-protein coupled receptor 1 family. As to expression, expressed at high levels in oocytes and at lower levels in brain and spinal cord. Below detection level in lung, heart, kidney, liver, muscle, stomach, and intestine.

It localises to the cell surface. It is found in the cell membrane. The protein resides in the endosome. Its function is as follows. Receptor for lysophosphatidic acid (LPA). Plays a role in the reorganization of the actin cytoskeleton, cell migration, differentiation and proliferation, and thereby contributes to the responses to tissue damage and infectious agents. Activates downstream signaling cascades via the G(i)/G(o), G(12)/G(13), and G(q) families of heteromeric G proteins. Signaling inhibits adenylyl cyclase activity and decreases cellular cAMP levels. Signaling triggers an increase of cytoplasmic Ca(2+) levels. Signaling leads to the activation of phospholipase C (PLC) and the formation of inositol 1,4,5-trisphosphate. Signaling mediates activation of down-stream MAP kinases. Contributes to the regulation of cell shape. Promotes Rho-dependent reorganization of the actin cytoskeleton in neuronal cells and neurite retraction. Promotes the activation of Rho and the formation of actin stress fibers. Promotes formation of lamellipodia at the leading edge of migrating cells via activation of Rac. Through its function as lysophosphatidic acid receptor, plays a role in chemotaxis and cell migration, including responses to injury and wounding. Promotes cell proliferation in response to lysophosphatidic acid. This is Lysophosphatidic acid receptor 1-A (lpar1-a) from Xenopus laevis (African clawed frog).